The primary structure comprises 165 residues: uncharacterized protein (165 aa).

Residues 51 to 102 (KQAAVEPGARGGERPTGSQAGVTDTPDSAPFQRRSRAPRAREQAAQAGLNQK) are disordered. Residues 66 to 76 (TGSQAGVTDTP) are compositionally biased toward polar residues.

This is an uncharacterized protein from Mus musculus (Mouse).